We begin with the raw amino-acid sequence, 61 residues long: Insect toxin BsIT3 (61 aa).

The LCN-type CS-alpha/beta domain occupies Asp-1 to Asn-61. Intrachain disulfides connect Cys-10–Cys-60, Cys-14–Cys-35, Cys-21–Cys-42, and Cys-25–Cys-44.

Belongs to the long (4 C-C) scorpion toxin superfamily. Sodium channel inhibitor family. Beta subfamily. In terms of tissue distribution, expressed by the venom gland.

It is found in the secreted. Its function is as follows. Depressant insect beta-toxins cause a transient contraction paralysis followed by a slow flaccid paralysis. They bind voltage-independently at site-4 of sodium channels (Nav) and shift the voltage of activation toward more negative potentials thereby affecting sodium channel activation and promoting spontaneous and repetitive firing. This toxin is active only on insects. This Hottentotta tamulus sindicus (Scorpion) protein is Insect toxin BsIT3.